A 305-amino-acid polypeptide reads, in one-letter code: NAD kinase 2 (305 aa).

Catalysis depends on Asp-78, which acts as the Proton acceptor. NAD(+) is bound by residues 78–79 (DG), 152–153 (NE), Asp-182, 193–198 (TAYSLS), and Asn-251.

The protein belongs to the NAD kinase family. A divalent metal cation is required as a cofactor.

The protein localises to the cytoplasm. The catalysed reaction is NAD(+) + ATP = ADP + NADP(+) + H(+). Its function is as follows. Involved in the regulation of the intracellular balance of NAD and NADP, and is a key enzyme in the biosynthesis of NADP. Catalyzes specifically the phosphorylation on 2'-hydroxyl of the adenosine moiety of NAD to yield NADP. Functions as a growth repressor under light-activated heterotrophic growth conditions and light and dark cycle conditions in the presence of glucose. NADP(H)/NAD(H) maintenance by slr0400 probably plays a significant role in modulating glycolysis and the TCA cycle to repress the growth rate and maintain the photosynthetic capacity. The protein is NAD kinase 2 of Synechocystis sp. (strain ATCC 27184 / PCC 6803 / Kazusa).